The primary structure comprises 208 residues: uncharacterized protein (208 aa).

This is an uncharacterized protein from Ictalurid herpesvirus 1 (strain Auburn) (IcHV-1).